The following is a 395-amino-acid chain: Zinc finger protein 385D (395 aa).

Matrin-type zinc fingers lie at residues 80-110 (ISCN…KLKA), 204-234 (LYCS…MLEA), and 267-297 (FHCE…RASG). Residues 282-308 (LKQHISSRRHKDRASGKPPKPKYSPYN) are disordered.

It is found in the nucleus. The polypeptide is Zinc finger protein 385D (Znf385d) (Rattus norvegicus (Rat)).